Here is a 585-residue protein sequence, read N- to C-terminus: Chaperonin GroEL, chloroplastic (585 aa).

Residues 55–58 (TLGP), 113–117 (DGTTT), Gly-442, 507–509 (NAA), and Asp-523 each bind ATP.

It belongs to the chaperonin (HSP60) family. In terms of assembly, forms a cylinder of 14 subunits composed of two heptameric rings stacked back-to-back. Interacts with the co-chaperonin GroES.

It is found in the plastid. It localises to the chloroplast. The enzyme catalyses ATP + H2O + a folded polypeptide = ADP + phosphate + an unfolded polypeptide.. Its function is as follows. Together with its co-chaperonin GroES, plays an essential role in assisting protein folding. The GroEL-GroES system forms a nano-cage that allows encapsulation of the non-native substrate proteins and provides a physical environment optimized to promote and accelerate protein folding. This is Chaperonin GroEL, chloroplastic from Pyrenomonas salina.